The primary structure comprises 528 residues: GTPase Der (528 aa).

2 stretches are compositionally biased toward acidic residues: residues 1–12 (MDVEGAFADEEE) and 30–62 (GYDD…PDFG). A disordered region spans residues 1–62 (MDVEGAFADE…EDDFAAPDFG (62 aa)). 2 consecutive EngA-type G domains span residues 90–253 (CTVA…PEEP) and 263–436 (RRVA…ENWD). Residues 96–103 (GRPNVGKS), 143–147 (DTGGW), 205–208 (NKFD), 269–276 (GKPNVGKS), 316–320 (DTAGL), and 381–384 (NKWD) each bind GTP. Residues 437–519 (RRVSTGQLNN…PIRIAVRVRE (83 aa)) enclose the KH-like domain.

It belongs to the TRAFAC class TrmE-Era-EngA-EngB-Septin-like GTPase superfamily. EngA (Der) GTPase family. Associates with the 50S ribosomal subunit.

GTPase that plays an essential role in the late steps of ribosome biogenesis. The sequence is that of GTPase Der from Corynebacterium efficiens (strain DSM 44549 / YS-314 / AJ 12310 / JCM 11189 / NBRC 100395).